Here is a 577-residue protein sequence, read N- to C-terminus: Hemagglutinin-neuraminidase (577 aa).

Residues M1–R26 lie on the Intravirion side of the membrane. The helical transmembrane segment at I27–S47 threads the bilayer. The Virion surface portion of the chain corresponds to M48–G577. A glycan (N-linked (GlcNAc...) asparagine; by host) is linked at N119. The important for interaction with fusion/F protein stretch occupies residues G124 to Y152. 3 disulfides stabilise this stretch: C172–C196, C186–C247, and C238–C251. The tract at residues N234 to S239 is involved in neuraminidase activity. Residues N341 and N433 are each glycosylated (N-linked (GlcNAc...) asparagine; by host). Intrachain disulfides connect C344–C461 and C455–C465. N-linked (GlcNAc...) asparagine; by host glycans are attached at residues N481 and N538. A disulfide bridge connects residues C531 and C542.

The protein belongs to the paramyxoviruses hemagglutinin-neuraminidase family. Homotetramer; composed of disulfide-linked homodimers. Interacts with F protein trimer. Interacts with host CG-1B; this interaction inhibits viral adsorption and replication rather than internalization.

The protein localises to the virion membrane. Its subcellular location is the host cell membrane. The catalysed reaction is Hydrolysis of alpha-(2-&gt;3)-, alpha-(2-&gt;6)-, alpha-(2-&gt;8)- glycosidic linkages of terminal sialic acid residues in oligosaccharides, glycoproteins, glycolipids, colominic acid and synthetic substrates.. Mediates the viral entry into the host cell together with fusion/F protein. Attaches the virus to sialic acid-containing cell receptors and thereby initiates infection. Binding of HN protein to the receptor induces a conformational change that allows the F protein to trigger virion/cell membranes fusion. Its function is as follows. Neuraminidase activity ensures the efficient spread of the virus by dissociating the mature virions from the neuraminic acid containing glycoproteins. This is Hemagglutinin-neuraminidase (HN) from Gallus gallus (Chicken).